The sequence spans 369 residues: Anhydro-N-acetylmuramic acid kinase (369 aa).

ATP is bound at residue 12–19; the sequence is GTSMDGVD.

Belongs to the anhydro-N-acetylmuramic acid kinase family.

It carries out the reaction 1,6-anhydro-N-acetyl-beta-muramate + ATP + H2O = N-acetyl-D-muramate 6-phosphate + ADP + H(+). Its pathway is amino-sugar metabolism; 1,6-anhydro-N-acetylmuramate degradation. The protein operates within cell wall biogenesis; peptidoglycan recycling. In terms of biological role, catalyzes the specific phosphorylation of 1,6-anhydro-N-acetylmuramic acid (anhMurNAc) with the simultaneous cleavage of the 1,6-anhydro ring, generating MurNAc-6-P. Is required for the utilization of anhMurNAc either imported from the medium or derived from its own cell wall murein, and thus plays a role in cell wall recycling. In Shewanella sp. (strain W3-18-1), this protein is Anhydro-N-acetylmuramic acid kinase.